A 50-amino-acid polypeptide reads, in one-letter code: Sperm protamine P1 (50 aa).

This sequence belongs to the protamine P1 family. Cross-linked by interchain disulfide bonds around the DNA-helix. Testis.

The protein resides in the nucleus. Its subcellular location is the chromosome. Functionally, protamines substitute for histones in the chromatin of sperm during the haploid phase of spermatogenesis. They compact sperm DNA into a highly condensed, stable and inactive complex. This Saguinus imperator (Emperor tamarin) protein is Sperm protamine P1 (PRM1).